Consider the following 143-residue polypeptide: Antiholin-like protein LrgA (143 aa).

4 consecutive transmembrane segments (helical) span residues 6 to 26 (VYSFLSQAFIFSAIMLISNII), 30 to 50 (LPIPMPSSVIGLVILFSLLCL), 61 to 81 (LGTALTGIIGFLFVPSGISVI), and 97 to 117 (VIVVATVILLAVTGLFAQFIL).

It belongs to the CidA/LrgA family. LrgA subfamily.

The protein resides in the cell membrane. In terms of biological role, inhibits the expression or activity of extracellular murein hydrolases by interacting, possibly with LrgB, with the holin-like protein CidA. The LrgAB and CidA proteins may affect the proton motive force of the membrane. May be involved in programmed cell death (PCD), possibly triggering PCD in response to antibiotics and environmental stresses. In Bacillus cereus (strain AH820), this protein is Antiholin-like protein LrgA.